An 89-amino-acid polypeptide reads, in one-letter code: MSITAERKAALITEYATKAGDTGSPEVQVAILTERINNLTGHFKDHKKDNHSRRGLLTLVSSRRSLLDYLKKKDEARYTKLIGALGIRR.

The protein belongs to the universal ribosomal protein uS15 family. Part of the 30S ribosomal subunit. Forms a bridge to the 50S subunit in the 70S ribosome, contacting the 23S rRNA.

Its function is as follows. One of the primary rRNA binding proteins, it binds directly to 16S rRNA where it helps nucleate assembly of the platform of the 30S subunit by binding and bridging several RNA helices of the 16S rRNA. Functionally, forms an intersubunit bridge (bridge B4) with the 23S rRNA of the 50S subunit in the ribosome. The polypeptide is Small ribosomal subunit protein uS15 (Agrobacterium fabrum (strain C58 / ATCC 33970) (Agrobacterium tumefaciens (strain C58))).